Consider the following 173-residue polypeptide: Crossover junction endodeoxyribonuclease RuvC (173 aa).

Residues D8, E67, and D139 contribute to the active site. Residues D8, E67, and D139 each coordinate Mg(2+).

The protein belongs to the RuvC family. In terms of assembly, homodimer which binds Holliday junction (HJ) DNA. The HJ becomes 2-fold symmetrical on binding to RuvC with unstacked arms; it has a different conformation from HJ DNA in complex with RuvA. In the full resolvosome a probable DNA-RuvA(4)-RuvB(12)-RuvC(2) complex forms which resolves the HJ. It depends on Mg(2+) as a cofactor.

The protein resides in the cytoplasm. It carries out the reaction Endonucleolytic cleavage at a junction such as a reciprocal single-stranded crossover between two homologous DNA duplexes (Holliday junction).. In terms of biological role, the RuvA-RuvB-RuvC complex processes Holliday junction (HJ) DNA during genetic recombination and DNA repair. Endonuclease that resolves HJ intermediates. Cleaves cruciform DNA by making single-stranded nicks across the HJ at symmetrical positions within the homologous arms, yielding a 5'-phosphate and a 3'-hydroxyl group; requires a central core of homology in the junction. The consensus cleavage sequence is 5'-(A/T)TT(C/G)-3'. Cleavage occurs on the 3'-side of the TT dinucleotide at the point of strand exchange. HJ branch migration catalyzed by RuvA-RuvB allows RuvC to scan DNA until it finds its consensus sequence, where it cleaves and resolves the cruciform DNA. The chain is Crossover junction endodeoxyribonuclease RuvC from Aliivibrio salmonicida (strain LFI1238) (Vibrio salmonicida (strain LFI1238)).